Here is a 356-residue protein sequence, read N- to C-terminus: Protein-arginine kinase (356 aa).

Residues 24–254 enclose the Phosphagen kinase C-terminal domain; that stretch reads IVLSSRIRLA…MQLIQQERAA (231 aa). ATP-binding positions include 27 to 31, His91, Arg125, 176 to 180, and 207 to 212; these read SSRIR, RASVM, and RGIYGE. Positions 337 to 342 match the RDXXRA motif of the pArg binding pocket involved in allosteric regulation motif; that stretch reads RDERRA.

Belongs to the ATP:guanido phosphotransferase family.

It catalyses the reaction L-arginyl-[protein] + ATP = N(omega)-phospho-L-arginyl-[protein] + ADP + H(+). With respect to regulation, appears to be allosterically activated by the binding of pArg-containing polypeptides to the pArg-binding pocket localized in the C-terminal domain of McsB. Catalyzes the specific phosphorylation of arginine residues in a large number of proteins. Is part of the bacterial stress response system. Protein arginine phosphorylation has a physiologically important role and is involved in the regulation of many critical cellular processes, such as protein homeostasis, motility, competence, and stringent and stress responses, by regulating gene expression and protein activity. The chain is Protein-arginine kinase from Halalkalibacterium halodurans (strain ATCC BAA-125 / DSM 18197 / FERM 7344 / JCM 9153 / C-125) (Bacillus halodurans).